A 463-amino-acid chain; its full sequence is Probable cysteine protease RD21B (463 aa).

The signal sequence occupies residues Met-1–Ala-21. The propeptide at Met-22–Ala-137 is activation peptide. Asn-92 carries an N-linked (GlcNAc...) asparagine glycan. 5 disulfide bridges follow: Cys-159-Cys-201, Cys-193-Cys-234, Cys-292-Cys-343, Cys-376-Cys-388, and Cys-382-Cys-403. Cys-162 is an active-site residue. Catalysis depends on residues His-298 and Asn-318. The propeptide at Lys-354–Ala-463 is removed in mature form. N-linked (GlcNAc...) asparagine glycosylation occurs at Asn-415.

It belongs to the peptidase C1 family. In terms of assembly, interacts with PRN2. Interacts with WSCP.

Its function is as follows. Probable thiol protease. The protein is Probable cysteine protease RD21B of Arabidopsis thaliana (Mouse-ear cress).